Reading from the N-terminus, the 103-residue chain is Large ribosomal subunit protein bL21 (103 aa).

This sequence belongs to the bacterial ribosomal protein bL21 family. In terms of assembly, part of the 50S ribosomal subunit. Contacts protein L20.

In terms of biological role, this protein binds to 23S rRNA in the presence of protein L20. This Actinobacillus pleuropneumoniae serotype 7 (strain AP76) protein is Large ribosomal subunit protein bL21.